We begin with the raw amino-acid sequence, 325 residues long: NADH-quinone oxidoreductase subunit H (325 aa).

9 helical membrane-spanning segments follow: residues 11 to 31 (ILLSILKAVVILLVVVTCGAF), 50 to 69 (NRVGWGGSLQLVADMIKMFF), 81 to 101 (VIFTLAPMIAFTSLLLSFAIV), 114 to 134 (IGILFFLMMAGLAVYAVLFAG), 154 to 174 (VSYEVFLGLSLMGVVAQAGSF), 186 to 206 (LWNVIPQFFGFVTFAIAGVAV), 237 to 257 (FFVGEYIGIVTVSALMVTLFF), 265 to 285 (LPPFVWFALKTAFFMMMFILI), and 304 to 324 (VCLPLTLINLLVTAAVILWQA).

This sequence belongs to the complex I subunit 1 family. In terms of assembly, NDH-1 is composed of 13 different subunits. Subunits NuoA, H, J, K, L, M, N constitute the membrane sector of the complex.

It localises to the cell inner membrane. It catalyses the reaction a quinone + NADH + 5 H(+)(in) = a quinol + NAD(+) + 4 H(+)(out). Functionally, NDH-1 shuttles electrons from NADH, via FMN and iron-sulfur (Fe-S) centers, to quinones in the respiratory chain. The immediate electron acceptor for the enzyme in this species is believed to be ubiquinone. Couples the redox reaction to proton translocation (for every two electrons transferred, four hydrogen ions are translocated across the cytoplasmic membrane), and thus conserves the redox energy in a proton gradient. This subunit may bind ubiquinone. The protein is NADH-quinone oxidoreductase subunit H of Salmonella arizonae (strain ATCC BAA-731 / CDC346-86 / RSK2980).